Consider the following 203-residue polypeptide: LexA repressor (203 aa).

The segment at residues isoleucine 28–lysine 47 is a DNA-binding region (H-T-H motif). Active-site for autocatalytic cleavage activity residues include serine 127 and lysine 164.

This sequence belongs to the peptidase S24 family. In terms of assembly, homodimer.

The catalysed reaction is Hydrolysis of Ala-|-Gly bond in repressor LexA.. Its function is as follows. Represses a number of genes involved in the response to DNA damage (SOS response), including recA and lexA. In the presence of single-stranded DNA, RecA interacts with LexA causing an autocatalytic cleavage which disrupts the DNA-binding part of LexA, leading to derepression of the SOS regulon and eventually DNA repair. The chain is LexA repressor from Leptospira interrogans serogroup Icterohaemorrhagiae serovar copenhageni (strain Fiocruz L1-130).